The following is a 222-amino-acid chain: Riboflavin kinase (222 aa).

Residues 1–94 are H-T-H motif-like; that stretch reads METIDAEDAA…AKIFDVKDEQ (94 aa). The interval 95–222 is riboflavin kinase; it reads YVLTGTVMSG…ENSEVVVVIG (128 aa). 104-109 is a CDP binding site; sequence GVGEGR. Residues threonine 133 and asparagine 135 each coordinate Mg(2+). Residues threonine 190 and glutamate 198 each coordinate FMN. A CDP-binding site is contributed by 203-206; that stretch reads TQLR.

It belongs to the archaeal riboflavin kinase family. Mg(2+) is required as a cofactor.

The enzyme catalyses riboflavin + CTP = CDP + FMN + H(+). The protein operates within cofactor biosynthesis; FMN biosynthesis; FMN from riboflavin (CTP route): step 1/1. Its function is as follows. Catalyzes the CTP-dependent phosphorylation of riboflavin (vitamin B2) to form flavin mononucleotide (FMN). This is Riboflavin kinase (ribK) from Methanocorpusculum labreanum (strain ATCC 43576 / DSM 4855 / Z).